Reading from the N-terminus, the 451-residue chain is Enolase (451 aa).

(2R)-2-phosphoglycerate is bound at residue Q163. E205 (proton donor) is an active-site residue. Mg(2+) contacts are provided by D258, E308, and D335. (2R)-2-phosphoglycerate contacts are provided by K360, R389, S390, and K411. The active-site Proton acceptor is the K360.

This sequence belongs to the enolase family. The cofactor is Mg(2+).

It localises to the cytoplasm. The protein localises to the secreted. It is found in the cell surface. The enzyme catalyses (2R)-2-phosphoglycerate = phosphoenolpyruvate + H2O. It participates in carbohydrate degradation; glycolysis; pyruvate from D-glyceraldehyde 3-phosphate: step 4/5. Catalyzes the reversible conversion of 2-phosphoglycerate (2-PG) into phosphoenolpyruvate (PEP). It is essential for the degradation of carbohydrates via glycolysis. The chain is Enolase from Mycoplasma capricolum subsp. capricolum (strain California kid / ATCC 27343 / NCTC 10154).